The following is a 365-amino-acid chain: MNVDAMDPQQYDAQLDVKRQKLAQLFVDFETPELEVFASQKAHYRMRAEFRVWHEGEDLYYYMFDKAQNQKIRCEQFLPASQLINDMMPELMAALRPNPVLRHKLFQVDFLSTLSGEILVSLLYHKQLDAQWQEEAQALKEALSSKFKVDIIGRARKQKLVMDRDFVIESLPVNGKQLTYKQVENSFTQPNGEVAIKMLEWAIDITRDSSGDLLELYCGNGNFSIALAQNFNRVLATELAKPSVDSAQYNIEANQIDNLQIIRMSAEDFTDALAKKRSFRRLEGVDLDSYDCNTIFVDPPRAGLDDNTLSMVQGYERILYISCNPNTLLDNLKVLDKTHKITRFALFDQFPYTDHMESGVLLERR.

5 residues coordinate S-adenosyl-L-methionine: Gln189, Tyr217, Asn222, Glu238, and Asp298. Cys323 serves as the catalytic Nucleophile. Catalysis depends on Glu357, which acts as the Proton acceptor.

It belongs to the class I-like SAM-binding methyltransferase superfamily. RNA M5U methyltransferase family. TrmA subfamily.

The enzyme catalyses uridine(54) in tRNA + S-adenosyl-L-methionine = 5-methyluridine(54) in tRNA + S-adenosyl-L-homocysteine + H(+). It catalyses the reaction uridine(341) in tmRNA + S-adenosyl-L-methionine = 5-methyluridine(341) in tmRNA + S-adenosyl-L-homocysteine + H(+). Its function is as follows. Dual-specificity methyltransferase that catalyzes the formation of 5-methyluridine at position 54 (m5U54) in all tRNAs, and that of position 341 (m5U341) in tmRNA (transfer-mRNA). The chain is tRNA/tmRNA (uracil-C(5))-methyltransferase from Shewanella loihica (strain ATCC BAA-1088 / PV-4).